Consider the following 4555-residue polypeptide: Protocadherin Fat 3 (4555 aa).

Residues 1–31 form the signal peptide; that stretch reads MSVTMGHCMGTKPPSCIILLLLKLFATVSQG. At 32–4153 the chain is on the extracellular side; sequence LPGTGPLGFH…AGHSYVGKEE (4122 aa). Cadherin domains are found at residues 43-157, 158-262, 263-374, 376-471, 472-577, 578-680, 726-830, 831-935, 936-1042, 1043-1147, 1148-1253, 1254-1358, 1362-1459, 1460-1565, 1566-1768, 1769-1882, 1883-1985, 1982-2083, 2084-2185, 2186-2286, 2287-2393, 2394-2495, 2496-2599, 2600-2707, 2708-2813, 2814-2923, 2924-3028, 3029-3130, 3131-3235, 3236-3340, 3341-3445, 3446-3550, and 3551-3660; these read THST…RPLF, SPTT…NEHA, PIIH…TPVR, EKDV…TPEF, QEAL…SPLF, EKVA…SKSF, KSFP…NPVF, LQDS…SPAF, IPSS…TPYF, PDFA…APLT, SEPI…RPQF, PEKV…SPIP, DEPF…GPEF, SQPH…SPYF, TNPL…PPVF, LFSQ…PPVF, TQAV…TQSF, TQSF…SPVF, VGLP…MPVF, DKPF…PPVF, DQPT…PPVF, NQLI…SPAF, SQST…APQF, MTVE…LPSF, TQSQ…KPVF, ETST…APVF, AHEV…SPVC, DQVA…PPVF, SSNH…PPVF, ERRD…PPRF, SQDV…SPVF, TPAN…KPTA, and IPLE…PEDF. Asn-48 carries N-linked (GlcNAc...) asparagine glycosylation. Residue Asn-341 is glycosylated (N-linked (GlcNAc...) asparagine). 7 N-linked (GlcNAc...) asparagine glycosylation sites follow: Asn-481, Asn-562, Asn-667, Asn-799, Asn-879, Asn-898, and Asn-1006. Residues Asn-1367 and Asn-1429 are each glycosylated (N-linked (GlcNAc...) asparagine). Residue Asn-1751 is glycosylated (N-linked (GlcNAc...) asparagine). Residues Asn-1944, Asn-1993, and Asn-1996 are each glycosylated (N-linked (GlcNAc...) asparagine). Asn-2208, Asn-2292, Asn-2331, and Asn-2467 each carry an N-linked (GlcNAc...) asparagine glycan. Asn-2734 is a glycosylation site (N-linked (GlcNAc...) asparagine). An N-linked (GlcNAc...) asparagine glycan is attached at Asn-3000. Asn-3201 is a glycosylation site (N-linked (GlcNAc...) asparagine). N-linked (GlcNAc...) asparagine glycans are attached at residues Asn-3449, Asn-3618, and Asn-3741. The EGF-like 1 domain occupies 3794–3832; sequence SNDPCVEKPCPEDMQCVGYEASRRPFLCQCPPGKLGECS. Intrachain disulfides connect Cys-3798–Cys-3809, Cys-3803–Cys-3821, and Cys-3823–Cys-3831. The Laminin G-like domain occupies 3834–4017; it reads HTSLSFAGNS…VGLTELKLGC (184 aa). The N-linked (GlcNAc...) asparagine glycan is linked to Asn-3926. 10 disulfides stabilise this stretch: Cys-3984–Cys-4017, Cys-4024–Cys-4035, Cys-4029–Cys-4045, Cys-4047–Cys-4056, Cys-4063–Cys-4074, Cys-4068–Cys-4083, Cys-4085–Cys-4094, Cys-4101–Cys-4112, Cys-4106–Cys-4121, and Cys-4123–Cys-4132. EGF-like domains follow at residues 4020–4057 and 4059–4095; these read YPDA…TNCE and EITA…VTCE. The EGF-like 4; calcium-binding domain maps to 4097–4133; sequence DVDECEREECENGGSCVNLFGSFFCNCTPGYVGQYCG. A helical transmembrane segment spans residues 4154–4174; that stretch reads LIGIAVVLFVIFTLIVLFIVF. Topologically, residues 4175-4555 are cytoplasmic; it reads RKKVFRKNYS…FVETQQQTQV (381 aa). Disordered regions lie at residues 4300–4353 and 4395–4474; these read IRKN…YHWD and GGYD…LGGP. The segment covering 4322–4343 has biased composition (polar residues); the sequence is CFTNSNKGSNSEVQSLSSFQSD. 2 positions are modified to omega-N-methylarginine: Arg-4508 and Arg-4518.

In terms of tissue distribution, restricted to the nervous system, mainly in brain. In brain, it is highly expressed in the olfactory bulb and retina. In the developing olfactory bulb, it localizes along the dendrites of these cells as well as in their axons to some extent. In retina, it cocentrates in the inner plexiform layer throughout development (at protein level).

Its subcellular location is the membrane. In terms of biological role, may play a role in the interactions between neurites derived from specific subsets of neurons during development. The protein is Protocadherin Fat 3 (Fat3) of Mus musculus (Mouse).